We begin with the raw amino-acid sequence, 92 residues long: Small ribosomal subunit protein uS19 (92 aa).

This sequence belongs to the universal ribosomal protein uS19 family.

Functionally, protein S19 forms a complex with S13 that binds strongly to the 16S ribosomal RNA. The sequence is that of Small ribosomal subunit protein uS19 from Nitrobacter hamburgensis (strain DSM 10229 / NCIMB 13809 / X14).